We begin with the raw amino-acid sequence, 376 residues long: Queuine tRNA-ribosyltransferase (376 aa).

Residue D93 is the Proton acceptor of the active site. Residues 93–97, D147, Q190, and G217 each bind substrate; that span reads DSGGF. Residues 248-254 form an RNA binding region; sequence GVGTPDD. The Nucleophile role is filled by D267. Residues 272–276 form an RNA binding; important for wobble base 34 recognition region; that stretch reads TRSGR.

The protein belongs to the queuine tRNA-ribosyltransferase family. Homodimer. Within each dimer, one monomer is responsible for RNA recognition and catalysis, while the other monomer binds to the replacement base PreQ1.

It carries out the reaction 7-aminomethyl-7-carbaguanine + guanosine(34) in tRNA = 7-aminomethyl-7-carbaguanosine(34) in tRNA + guanine. The protein operates within tRNA modification; tRNA-queuosine biosynthesis. Functionally, catalyzes the base-exchange of a guanine (G) residue with the queuine precursor 7-aminomethyl-7-deazaguanine (PreQ1) at position 34 (anticodon wobble position) in tRNAs with GU(N) anticodons (tRNA-Asp, -Asn, -His and -Tyr). Catalysis occurs through a double-displacement mechanism. The nucleophile active site attacks the C1' of nucleotide 34 to detach the guanine base from the RNA, forming a covalent enzyme-RNA intermediate. The proton acceptor active site deprotonates the incoming PreQ1, allowing a nucleophilic attack on the C1' of the ribose to form the product. After dissociation, two additional enzymatic reactions on the tRNA convert PreQ1 to queuine (Q), resulting in the hypermodified nucleoside queuosine (7-(((4,5-cis-dihydroxy-2-cyclopenten-1-yl)amino)methyl)-7-deazaguanosine). The chain is Queuine tRNA-ribosyltransferase from Agrobacterium fabrum (strain C58 / ATCC 33970) (Agrobacterium tumefaciens (strain C58)).